Here is a 136-residue protein sequence, read N- to C-terminus: Histone H3.3 (136 aa).

The segment at Met1 to Pro45 is disordered. Residue Lys5 is modified to N6,N6,N6-trimethyllysine; alternate. Lys5 bears the N6,N6-dimethyllysine; alternate mark. Lys5 and Lys10 each carry N6-methyllysine; alternate. N6-acetyllysine; alternate is present on Lys10. The residue at position 11 (Ser11) is a Phosphoserine. N6,N6-dimethyllysine; alternate is present on Lys15. 5 positions are modified to N6-acetyllysine; alternate: Lys15, Lys19, Lys24, Lys28, and Lys37. Lys19, Lys24, Lys28, and Lys37 each carry N6-methyllysine; alternate. Low complexity predominate over residues Lys19–Ala32. N6,N6,N6-trimethyllysine; alternate occurs at positions 28 and 37. N6,N6-dimethyllysine; alternate occurs at positions 28 and 37. An N6-acetyllysine mark is found at Lys57 and Lys65. The residue at position 80 (Lys80) is an N6,N6,N6-trimethyllysine; alternate. Lys80 carries the N6,N6-dimethyllysine; alternate modification. Position 80 is an N6-methyllysine; alternate (Lys80). Lys123 is subject to N6-acetyllysine.

Belongs to the histone H3 family. As to quaternary structure, the nucleosome is a histone octamer containing two molecules each of H2A, H2B, H3 and H4 assembled in one H3-H4 heterotetramer and two H2A-H2B heterodimers. The octamer wraps approximately 147 bp of DNA. In terms of processing, phosphorylated by ark1 to form H3S10ph in a cell cycle-dependent manner during mitosis and meiosis. H3S10ph is also formed by ssp2, promotes subsequent H3K14ac formation by gcn5, and is required for transcriptional activation through TBP recruitment to the promoters. Dephosphorylation is performed by sds21. Mono-, di- and trimethylated by the COMPASS complex to form H3K4me1/2/3. H3K4me activates gene expression by regulating transcription elongation and plays a role in telomere length maintenance. H3K4me enrichment correlates with transcription levels, and occurs in a 5' to 3' gradient with H3K4me3 enrichment at the 5'-end of genes, shifting to H3K4me2 and then H3K4me1. Methylated by clr4 to form H3K9me1. H3K9me1 represents a specific tag for epigenetic transcriptional repression by recruiting swi6/HP1 to methylated histones. Targeting to histone probably involves clr3 and rik1. Essential for silencing of centromeres and directional switching of the mating type. Methylated by set2 to form H3K36me. H3K36me represses gene expression. Methylated by dot1 to form H3K79me. H3K79me is required for association of SIR proteins with telomeric regions and for telomeric silencing. The COMPASS-mediated formation of H3K4me2/3 and the dot1-mediated formation of H3K79me require H2BK123ub1. Post-translationally, acetylation of histone H3 leads to transcriptional activation. H3K14ac formation by gcn5 is promoted by H3S10ph. H3K14ac can also be formed by esa1. H3K56ac formation occurs predominantly in newly synthesized H3 molecules during G1, S and G2/M of the cell cycle and may be involved in DNA repair. Acetylation at Lys-123 (H3K122ac) plays a central role in chromatin structure: localizes at the surface of the histone octamer and stimulates transcription, possibly by promoting nucleosome instability.

Its subcellular location is the nucleus. It is found in the chromosome. Functionally, core component of nucleosome. Nucleosomes wrap and compact DNA into chromatin, limiting DNA accessibility to the cellular machineries which require DNA as a template. Histones thereby play a central role in transcription regulation, DNA repair, DNA replication and chromosomal stability. DNA accessibility is regulated via a complex set of post-translational modifications of histones, also called histone code, and nucleosome remodeling. The chain is Histone H3.3 (hht3) from Schizosaccharomyces pombe (strain 972 / ATCC 24843) (Fission yeast).